Consider the following 311-residue polypeptide: Olfactory receptor 10G9 (311 aa).

At 1–23 (MSKTSLVTAFILTGLPHAPGLDA) the chain is on the extracellular side. Residues 24–44 (PLFGIFLVVYVLTVLGNLLIL) form a helical membrane-spanning segment. Over 45–52 (LVIRVDSH) the chain is Cytoplasmic. A helical membrane pass occupies residues 53–73 (LHTPMYYFLTNLSFIDMWFST). The Extracellular portion of the chain corresponds to 74–98 (VTVPKMLMTLVSPSGRAISFHSCVA). An intrachain disulfide couples Cys96 to Cys188. Residues 99 to 119 (QLYFFHFLGSTECFLYTVMSY) form a helical membrane-spanning segment. At 120-138 (DRYLAISYPLRYTSMMSGS) the chain is on the cytoplasmic side. Residues 139–159 (RCALLATSTWLSGSLHSAVQT) form a helical membrane-spanning segment. Residues 160-196 (ILTFHLPYCGPNQIQHYLCDAPPILKLACADTSANEM) lie on the Extracellular side of the membrane. The helical transmembrane segment at 197–216 (VIFVDIGLVASGCFLLIVLS) threads the bilayer. The Cytoplasmic portion of the chain corresponds to 217–236 (YVSIVCSILRIHTSEGRHRA). Residues 237-257 (FQTCASHCIVVLCFFVPCVFI) traverse the membrane as a helical segment. Over 258–268 (YLRPGSRDVVD) the chain is Extracellular. The chain crosses the membrane as a helical span at residues 269–289 (GVVAIFYTVLTPLLNPVVYTL). The Cytoplasmic segment spans residues 290 to 311 (RNKEVKKAVLKLRDKVAHSQGE).

Belongs to the G-protein coupled receptor 1 family.

The protein localises to the cell membrane. Its function is as follows. Odorant receptor. The polypeptide is Olfactory receptor 10G9 (OR10G9) (Homo sapiens (Human)).